The following is a 310-amino-acid chain: Receptor homology region, transmembrane domain- and RING domain-containing protein 1 (310 aa).

A signal peptide spans 1-25; sequence MRLVVSSCLLVAAPFLSSLLRVSLA. Topologically, residues 26 to 168 are lumenal; that stretch reads TVVLNSISAS…NPPDRGSAWT (143 aa). An intrachain disulfide couples cysteine 65 to cysteine 92. An N-linked (GlcNAc...) asparagine glycan is attached at asparagine 75. One can recognise a PA domain in the interval 81 to 149; that stretch reads TTKFALIIRG…VAGEILRKYA (69 aa). Residues 169–189 form a helical membrane-spanning segment; sequence VLAISFFSLLLIVTFLLIAFF. At 190 to 310 the chain is on the cytoplasmic side; the sequence is APRHWTQWRG…FAFAQSSQSR (121 aa). An RING-type; atypical zinc finger spans residues 232 to 274; it reads CAICLEDYRFGESLRLLPCQHAFHLNCIDSWLTKWGTSCPVCK. Residues 284 to 293 are compositionally biased toward basic and acidic residues; sequence SEVHKRESPR. Positions 284–310 are disordered; that stretch reads SEVHKRESPRTDTSTSRFAFAQSSQSR. The segment covering 294–310 has biased composition (polar residues); it reads TDTSTSRFAFAQSSQSR.

As to expression, expressed in leaves, stems, flowers and siliques.

It is found in the prevacuolar compartment membrane. The protein localises to the protein storage vacuole membrane. It localises to the golgi apparatus membrane. Functionally, involved in the trafficking of vacuolar proteins. Functions probably as a sorting receptor for protein trafficking to the protein storage vacuole (PSV) by binding the C-terminal vacuolar sorting determinant (VSD) of vacuolar-sorted proteins. This is Receptor homology region, transmembrane domain- and RING domain-containing protein 1 (RMR1) from Arabidopsis thaliana (Mouse-ear cress).